Consider the following 136-residue polypeptide: Nucleoside diphosphate kinase (136 aa).

Residues K10, F58, R86, T92, R104, and N114 each contribute to the ATP site. The active-site Pros-phosphohistidine intermediate is H117.

This sequence belongs to the NDK family. As to quaternary structure, homotetramer. Requires Mg(2+) as cofactor.

It is found in the cytoplasm. It catalyses the reaction a 2'-deoxyribonucleoside 5'-diphosphate + ATP = a 2'-deoxyribonucleoside 5'-triphosphate + ADP. The enzyme catalyses a ribonucleoside 5'-diphosphate + ATP = a ribonucleoside 5'-triphosphate + ADP. Its function is as follows. Major role in the synthesis of nucleoside triphosphates other than ATP. The ATP gamma phosphate is transferred to the NDP beta phosphate via a ping-pong mechanism, using a phosphorylated active-site intermediate. This is Nucleoside diphosphate kinase from Mycolicibacterium paratuberculosis (strain ATCC BAA-968 / K-10) (Mycobacterium paratuberculosis).